The sequence spans 673 residues: UvrABC system protein B (673 aa).

A Helicase ATP-binding domain is found at 26–183 (EGLEDGLAHQ…RRLAELQYAR (158 aa)). 39–46 (GVTGSGKT) lines the ATP pocket. Positions 92–115 (YYDYYQPEAYVPSSDTFIEKDASV) match the Beta-hairpin motif. Positions 431 to 597 (QVDDLLSEIR…GLNKKVVDIL (167 aa)) constitute a Helicase C-terminal domain. The disordered stretch occupies residues 608–627 (AKGRGKSRPIVEPDNVPMDM). The 36-residue stretch at 633–668 (QQKIHELEGLMMQHAQNLEFEEAAQIRDQLHQLRDL) folds into the UVR domain.

It belongs to the UvrB family. As to quaternary structure, forms a heterotetramer with UvrA during the search for lesions. Interacts with UvrC in an incision complex.

Its subcellular location is the cytoplasm. Functionally, the UvrABC repair system catalyzes the recognition and processing of DNA lesions. A damage recognition complex composed of 2 UvrA and 2 UvrB subunits scans DNA for abnormalities. Upon binding of the UvrA(2)B(2) complex to a putative damaged site, the DNA wraps around one UvrB monomer. DNA wrap is dependent on ATP binding by UvrB and probably causes local melting of the DNA helix, facilitating insertion of UvrB beta-hairpin between the DNA strands. Then UvrB probes one DNA strand for the presence of a lesion. If a lesion is found the UvrA subunits dissociate and the UvrB-DNA preincision complex is formed. This complex is subsequently bound by UvrC and the second UvrB is released. If no lesion is found, the DNA wraps around the other UvrB subunit that will check the other stand for damage. This Escherichia coli O7:K1 (strain IAI39 / ExPEC) protein is UvrABC system protein B.